Consider the following 299-residue polypeptide: Putative zinc-binding protein ORF12 (299 aa).

This chain is Putative zinc-binding protein ORF12 (ORF12), found in Ictaluridae (bullhead catfishes).